Consider the following 83-residue polypeptide: Disintegrin isoform D-2 (83 aa).

Residues 2–83 (PPVCGNELLE…GKSSDCPWNH (82 aa)) form the Disintegrin domain. 7 cysteine pairs are disulfide-bonded: Cys-5-Cys-24, Cys-16-Cys-34, Cys-18-Cys-29, Cys-28-Cys-51, Cys-42-Cys-48, Cys-47-Cys-72, and Cys-60-Cys-79. A Cell attachment site motif is present at residues 64–66 (RGD).

It belongs to the venom metalloproteinase (M12B) family. P-II subfamily. P-IIa sub-subfamily. In terms of assembly, monomer (disintegrin). As to expression, expressed by the venom gland.

It localises to the secreted. Its function is as follows. Inhibits fibrinogen interaction with platelets. Acts by binding to the alpha-IIb/beta-3 (ITGA2B/ITGB3) on the platelet surface and inhibits aggregation induced by ADP, thrombin, platelet-activating factor and collagen. This is Disintegrin isoform D-2 from Bitis arietans (African puff adder).